The primary structure comprises 204 residues: Putative AgrB-like protein (204 aa).

The next 4 helical transmembrane spans lie at 52–74 (YGIA…YLWL), 87–107 (LNCT…FQNV), 111–131 (NWIV…FAPA), and 156–176 (LILT…LIMI).

It belongs to the AgrB family.

The protein resides in the cell membrane. Functionally, may be involved in the proteolytic processing of a quorum sensing system signal molecule precursor. In Listeria monocytogenes serotype 4a (strain HCC23), this protein is Putative AgrB-like protein.